The sequence spans 438 residues: C4-dicarboxylate transport protein 1 (438 aa).

8 consecutive transmembrane segments (helical) span residues 20-42, 57-77, 90-112, 160-179, 192-214, 229-251, 324-346, and 361-383; these read LYVQVLIAILIGAMVGCLWPSVA, LIKMVIAPIIFCTVTSGIAHI, ALFYFEIVSSFALLLGLAMGNLV, VLQVLLFAILFGFSLMALGK, AHAVFGVIAIVMKAAPIGAFGAM, LIGLIALFYVTAALFVVVVLGLI, LFIAQALGVDLSFGQQLTILLVA, and FITLAATLSVVNPALVPGMAIVF.

This sequence belongs to the dicarboxylate/amino acid:cation symporter (DAACS) (TC 2.A.23) family.

The protein localises to the cell inner membrane. Its function is as follows. Responsible for the transport of dicarboxylates such as succinate, fumarate, and malate from the periplasm across the membrane. This Bradyrhizobium diazoefficiens (strain JCM 10833 / BCRC 13528 / IAM 13628 / NBRC 14792 / USDA 110) protein is C4-dicarboxylate transport protein 1.